The primary structure comprises 206 residues: Geminin (206 aa).

Over residues 1–18 (MNLSMKQKQEGAQENVKN) the composition is skewed to polar residues. The interval 1–42 (MNLSMKQKQEGAQENVKNSPVPRRTLKMIQPSADGSLVGREN) is disordered. The residue at position 27 (Lys-27) is an N6-acetyllysine. Ser-36, Ser-63, and Ser-64 each carry phosphoserine. The tract at residues 79–158 (TQEAFDLISK…AEVIERLSNE (80 aa)) is necessary and sufficient for interaction with IDAS and CDT1. A coiled-coil region spans residues 91 to 141 (PSSQYWKEVAEQRRKALYEALKENEKLHKEIEQKDSEIARLRKENKDLAEV). Residues 157-206 (NEPLDNFESPDSQEFDSEEEAVEYSELEDSGAGTCAEETVSSSTDARPCT) are disordered. The span at 167 to 185 (DSQEFDSEEEAVEYSELED) shows a compositional bias: acidic residues. Residues 167–187 (DSQEFDSEEEAVEYSELEDSG) are homeodomain binding. Ser-181 carries the phosphoserine; by CK2 modification. A compositionally biased stretch (polar residues) spans 195–206 (TVSSSTDARPCT).

The protein belongs to the geminin family. As to quaternary structure, homotetramer. Interacts with CDT1; this inhibits binding of the MCM complex to origins of replication. The complex with CDT1 exists in two forms, a 'permissive' heterotrimer and an 'inhibitory' heterohexamer. Interacts (via coiled-coil domain) with IDAS (via coiled-coil domain); this targets GMNN to the nucleus. The heterodimer formed by GMNN and MCIDAS has much lower affinity for CDT1 than the GMNN homodimer. Interacts with a subset of Hox proteins, affinity increasing from anterior to posterior types, the strongest interaction being with HOXB1, HOXC9 and HOXD10. Interacts with LRWD1 from G1/S to mitosis. In terms of processing, phosphorylated during mitosis. Phosphorylation at Ser-181 by CK2 results in enhanced binding to Hox proteins and more potent inhibitory effect on Hox transcriptional activity.

Its subcellular location is the cytoplasm. The protein localises to the nucleus. Functionally, inhibits DNA replication by preventing the incorporation of MCM complex into pre-replication complex (pre-RC). It is degraded during the mitotic phase of the cell cycle. Its destruction at the metaphase-anaphase transition permits replication in the succeeding cell cycle. Inhibits histone acetyltransferase activity of KAT7/HBO1 in a CDT1-dependent manner, inhibiting histone H4 acetylation and DNA replication licensing. Inhibits the transcriptional activity of a subset of Hox proteins, enrolling them in cell proliferative control. This chain is Geminin (Gmnn), found in Mus musculus (Mouse).